We begin with the raw amino-acid sequence, 490 residues long: Probable cytosol aminopeptidase (490 aa).

2 residues coordinate Mn(2+): Lys-256 and Asp-261. The active site involves Lys-268. Asp-280, Asp-340, and Glu-342 together coordinate Mn(2+). The active site involves Arg-344.

Belongs to the peptidase M17 family. The cofactor is Mn(2+).

The protein localises to the cytoplasm. It catalyses the reaction Release of an N-terminal amino acid, Xaa-|-Yaa-, in which Xaa is preferably Leu, but may be other amino acids including Pro although not Arg or Lys, and Yaa may be Pro. Amino acid amides and methyl esters are also readily hydrolyzed, but rates on arylamides are exceedingly low.. It carries out the reaction Release of an N-terminal amino acid, preferentially leucine, but not glutamic or aspartic acids.. Its function is as follows. Presumably involved in the processing and regular turnover of intracellular proteins. Catalyzes the removal of unsubstituted N-terminal amino acids from various peptides. The protein is Probable cytosol aminopeptidase of Prochlorococcus marinus (strain MIT 9313).